Consider the following 231-residue polypeptide: MSNTPIELKGSSFTLSVVHLHEAEPKVIHQALEDKIAQAPAFLKHAPVVLNVSALEDPVNWSAMHKAVSATGLRVIGVSGCKDAQLKAEIEKMGLPILTEGKEKSPRPAPAPQAPAQNTTPVTKTRLIDTPVRSGQRIYAPQCDLIVTSHVSAGAELIADGNIHVYGMMRGRALAGASGDRETQIFCTNLMAELVSIAGEYWLSDQIPAEFYGKAARLQLVENALTVQPLN.

The tract at residues 100-125 is disordered; it reads EGKEKSPRPAPAPQAPAQNTTPVTKT.

Belongs to the MinC family. As to quaternary structure, interacts with MinD and FtsZ.

Its function is as follows. Cell division inhibitor that blocks the formation of polar Z ring septums. Rapidly oscillates between the poles of the cell to destabilize FtsZ filaments that have formed before they mature into polar Z rings. Prevents FtsZ polymerization. In Escherichia coli O81 (strain ED1a), this protein is Probable septum site-determining protein MinC.